Here is a 259-residue protein sequence, read N- to C-terminus: tRNA pseudouridine synthase A (259 aa).

Aspartate 52 acts as the Nucleophile in catalysis. Tyrosine 113 is a substrate binding site.

Belongs to the tRNA pseudouridine synthase TruA family. In terms of assembly, homodimer.

The enzyme catalyses uridine(38/39/40) in tRNA = pseudouridine(38/39/40) in tRNA. Its function is as follows. Formation of pseudouridine at positions 38, 39 and 40 in the anticodon stem and loop of transfer RNAs. This chain is tRNA pseudouridine synthase A, found in Allorhizobium ampelinum (strain ATCC BAA-846 / DSM 112012 / S4) (Agrobacterium vitis (strain S4)).